Here is a 383-residue protein sequence, read N- to C-terminus: Serine protease 23 (383 aa).

A signal peptide spans 1 to 19; that stretch reads MAGIPGLLFLLFLLLCAVG. Asn93 carries N-linked (GlcNAc...) asparagine glycosylation. The interval 108–127 is disordered; that stretch reads SSGGGAQHRDSGSSGKSRRK. Ser109 carries the phosphoserine; by FAM20C modification. The cysteines at positions 160 and 176 are disulfide-linked. The active-site Charge relay system is His175. N-linked (GlcNAc...) asparagine glycosylation is present at Asn207. Residues Asp240 and Ser316 each act as charge relay system in the active site.

This sequence belongs to the peptidase S1 family.

The protein localises to the secreted. This chain is Serine protease 23 (PRSS23), found in Macaca mulatta (Rhesus macaque).